The sequence spans 144 residues: uncharacterized protein (144 aa).

4 helical membrane-spanning segments follow: residues 16 to 36 (FLIF…GAIF), 48 to 68 (GFIV…ALII), 87 to 107 (LLPE…LVLL), and 120 to 140 (VMSL…WYFG).

It localises to the cell membrane. This is an uncharacterized protein from Methanocaldococcus jannaschii (strain ATCC 43067 / DSM 2661 / JAL-1 / JCM 10045 / NBRC 100440) (Methanococcus jannaschii).